The primary structure comprises 722 residues: Polyribonucleotide nucleotidyltransferase (722 aa).

Residues aspartate 495 and aspartate 501 each contribute to the Mg(2+) site. The 60-residue stretch at 562–621 (PRLLSFRIDPELIGTVIGPGGRTIKGITERTNTKIDIEDGGIVTIASHDGVAAEEAQKII) folds into the KH domain. The S1 motif domain maps to 631 to 699 (GEIFTGSITR…NRGRINLTLR (69 aa)). The span at 701-711 (VSQNNNDMNYP) shows a compositional bias: polar residues. The interval 701-722 (VSQNNNDMNYPQPTPTPVAPLN) is disordered. Positions 712-722 (QPTPTPVAPLN) are enriched in pro residues.

The protein belongs to the polyribonucleotide nucleotidyltransferase family. Requires Mg(2+) as cofactor.

It localises to the cytoplasm. The catalysed reaction is RNA(n+1) + phosphate = RNA(n) + a ribonucleoside 5'-diphosphate. Its function is as follows. Involved in mRNA degradation. Catalyzes the phosphorolysis of single-stranded polyribonucleotides processively in the 3'- to 5'-direction. This Prochlorococcus marinus (strain MIT 9211) protein is Polyribonucleotide nucleotidyltransferase.